The primary structure comprises 213 residues: MAGRHALVWLREDAQWQAVTPGAQPRLRQWFAAGLPAVVARGDGSQAPGSVRLGVPLPPSEGKQRLALQAHVADIARCTAPLTLDAVTPQAPVAVQPLLQALLAQARAHALRPHVFGSFAWQALTGLTYVHAQSDLDLLWPIETPEQARALVTLLQRWEQQHGLRADGELLLPEDNAVNWREYAGTAQQVLVKSNQDCRLLPRAALFPVRSAA.

Residues aspartate 135 and aspartate 137 contribute to the active site.

The protein belongs to the MdcG family.

It catalyses the reaction apo-[malonate decarboxylase ACP] + 2'-(5''-triphospho-alpha-D-ribosyl)-3'-dephospho-CoA = holo-[malonate decarboxylase ACP] + diphosphate. In terms of biological role, transfers 2'-(5-triphosphoribosyl)-3'-dephosphocoenzyme-A to the apo-[acyl-carrier-protein] of the malonate decarboxylase to yield holo-[acyl-carrier-protein]. The protein is Phosphoribosyl-dephospho-CoA transferase of Xanthomonas euvesicatoria pv. vesicatoria (strain 85-10) (Xanthomonas campestris pv. vesicatoria).